We begin with the raw amino-acid sequence, 306 residues long: Ribonuclease Z (306 aa).

Zn(2+)-binding residues include His-63, His-65, Asp-67, His-68, His-141, Asp-211, and His-269. Asp-67 functions as the Proton acceptor in the catalytic mechanism.

The protein belongs to the RNase Z family. Homodimer. It depends on Zn(2+) as a cofactor.

It catalyses the reaction Endonucleolytic cleavage of RNA, removing extra 3' nucleotides from tRNA precursor, generating 3' termini of tRNAs. A 3'-hydroxy group is left at the tRNA terminus and a 5'-phosphoryl group is left at the trailer molecule.. Its function is as follows. Zinc phosphodiesterase, which displays some tRNA 3'-processing endonuclease activity. Probably involved in tRNA maturation, by removing a 3'-trailer from precursor tRNA. This is Ribonuclease Z from Staphylococcus haemolyticus (strain JCSC1435).